Here is a 290-residue protein sequence, read N- to C-terminus: ATP synthase subunit a (290 aa).

The next 7 membrane-spanning stretches (helical) occupy residues 54–74 (AVHL…ILLF), 115–135 (IAPL…LKWI), 136–156 (PVDY…KIVP), 164–184 (FGLS…VKGF), 201–221 (LVPF…LSLA), 233–253 (VVFI…NVPW), and 254–274 (AIFH…LTVV).

It belongs to the ATPase A chain family. As to quaternary structure, F-type ATPases have 2 components, CF(1) - the catalytic core - and CF(0) - the membrane proton channel. CF(1) has five subunits: alpha(3), beta(3), gamma(1), delta(1), epsilon(1). CF(0) has three main subunits: a(1), b(2) and c(9-12). The alpha and beta chains form an alternating ring which encloses part of the gamma chain. CF(1) is attached to CF(0) by a central stalk formed by the gamma and epsilon chains, while a peripheral stalk is formed by the delta and b chains.

The protein localises to the cell inner membrane. Functionally, key component of the proton channel; it plays a direct role in the translocation of protons across the membrane. This Stutzerimonas stutzeri (strain A1501) (Pseudomonas stutzeri) protein is ATP synthase subunit a.